Consider the following 185-residue polypeptide: MINDVLKEAEDRMVKAVEALKREYATIRAGRANPNMLDKITVEYYGTQTPVNQLANISVPEPRMLTIQPWDKSSLPMIEKAILKSDLGLNPSSDGTVIRLLIPQLTAERRTEIVKTVKKKAEDSRVAVRNIRRDSNDELKKLEKDHTASEDEVKRAQDDVQKMTDKFVKEIERIMGTKEKEIMEV.

The interval 137-158 (DELKKLEKDHTASEDEVKRAQD) is disordered.

Belongs to the RRF family.

The protein localises to the cytoplasm. Its function is as follows. Responsible for the release of ribosomes from messenger RNA at the termination of protein biosynthesis. May increase the efficiency of translation by recycling ribosomes from one round of translation to another. In Desulfitobacterium hafniense (strain Y51), this protein is Ribosome-recycling factor.